The following is a 975-amino-acid chain: Protein cramped (975 aa).

Disordered stretches follow at residues 1 to 37, 71 to 111, 318 to 346, 403 to 450, and 809 to 844; these read MEEL…GGGA, QKMK…GSGK, AIFP…PSVA, PVAA…LMKM, and PIDR…QEPG. The segment covering 7–20 has biased composition (pro residues); the sequence is QPPPPPPLPPPPSS. The segment covering 86–98 has biased composition (basic and acidic residues); that stretch reads SEREPNKKEEKAA. Polar residues predominate over residues 100–111; that stretch reads KTPSQLKTGSGK. An SANT domain is found at 109–173; the sequence is SGKTTWTNVE…HYYQTYHKIC (65 aa). Over residues 410 to 425 the composition is skewed to basic and acidic residues; it reads LRTESGSEKRSPETKK. Low complexity predominate over residues 815 to 833; that stretch reads GTSSGGISSSGSKPDSSMG.

This sequence belongs to the cramped family.

The protein localises to the nucleus. Its function is as follows. Polycomb group (Pc-G) genes are needed to maintain expression patterns of the homeotic selector genes of the Antennapedia (Antp-C) and Bithorax (Bx-C) complexes, and hence for the maintenance of segmental determination. Can act as a modifier of position effect variegation (PEV). In Drosophila sechellia (Fruit fly), this protein is Protein cramped (crm).